Here is a 206-residue protein sequence, read N- to C-terminus: N-(5'-phosphoribosyl)anthranilate isomerase (206 aa).

The protein belongs to the TrpF family.

It carries out the reaction N-(5-phospho-beta-D-ribosyl)anthranilate = 1-(2-carboxyphenylamino)-1-deoxy-D-ribulose 5-phosphate. The protein operates within amino-acid biosynthesis; L-tryptophan biosynthesis; L-tryptophan from chorismate: step 3/5. This chain is N-(5'-phosphoribosyl)anthranilate isomerase, found in Pseudomonas putida (strain GB-1).